The chain runs to 154 residues: MVLKVKMGDIGVAKSPESIETLLGSCVAIILYDRGKKVGGVAHVMLPKSRNAAEKNPGKYADTALPELLDRMTKLGARKDKLTAKLAGGAAMFKCNSNTIDVGKKNIEASKEEVRKVGLRIASEDLGGDIGRTITLSLKDGSVIVRKGAELKTI.

The protein belongs to the CheD family.

The enzyme catalyses L-glutaminyl-[protein] + H2O = L-glutamyl-[protein] + NH4(+). Its function is as follows. Probably deamidates glutamine residues to glutamate on methyl-accepting chemotaxis receptors (MCPs), playing an important role in chemotaxis. The protein is Probable chemoreceptor glutamine deamidase CheD of Methanococcus maripaludis (strain C6 / ATCC BAA-1332).